Consider the following 257-residue polypeptide: Ubiquinone biosynthesis O-methyltransferase (257 aa).

S-adenosyl-L-methionine contacts are provided by Arg-43, Gly-77, Asp-98, and Met-144.

The protein belongs to the methyltransferase superfamily. UbiG/COQ3 family.

The catalysed reaction is a 3-demethylubiquinol + S-adenosyl-L-methionine = a ubiquinol + S-adenosyl-L-homocysteine + H(+). The enzyme catalyses a 3-(all-trans-polyprenyl)benzene-1,2-diol + S-adenosyl-L-methionine = a 2-methoxy-6-(all-trans-polyprenyl)phenol + S-adenosyl-L-homocysteine + H(+). It functions in the pathway cofactor biosynthesis; ubiquinone biosynthesis. Its function is as follows. O-methyltransferase that catalyzes the 2 O-methylation steps in the ubiquinone biosynthetic pathway. The protein is Ubiquinone biosynthesis O-methyltransferase of Psychrobacter cryohalolentis (strain ATCC BAA-1226 / DSM 17306 / VKM B-2378 / K5).